Here is a 552-residue protein sequence, read N- to C-terminus: Steroid transmembrane transporter SLC22A24 (552 aa).

12 consecutive transmembrane segments (helical) span residues 16–36 (FQIL…PHML), 144–164 (LISV…LIFG), 178–198 (CCLL…TFPV), 204–224 (FLGG…MSEW), 235–255 (GIIL…GFVI), 267–287 (IPLF…QWLI), 350–370 (IFYL…LMLN), 378–398 (IFLF…AVLL), 407–427 (ISQM…IFLS), 435–455 (VALA…HTVH), 469–489 (IGLN…LMIL), and 496–516 (LPWI…LLLP). Residues 524 to 552 (PNTIQDVENNRRDSRKTKQEDISMKVTQF) are disordered. Residues 531-546 (ENNRRDSRKTKQEDIS) show a composition bias toward basic and acidic residues.

The protein belongs to the major facilitator (TC 2.A.1) superfamily. Organic cation transporter (TC 2.A.1.19) family.

It localises to the cell membrane. It carries out the reaction estrone 3-sulfate(out) + glutarate(in) = estrone 3-sulfate(in) + glutarate(out). It catalyses the reaction 17beta-estradiol 17-O-(beta-D-glucuronate)(out) + glutarate(in) = 17beta-estradiol 17-O-(beta-D-glucuronate)(in) + glutarate(out). The catalysed reaction is taurocholate(out) + glutarate(in) = taurocholate(in) + glutarate(out). The enzyme catalyses glycocholate(out) + glutarate(in) = glycocholate(in) + glutarate(out). It carries out the reaction dehydroepiandrosterone 3-sulfate(out) + glutarate(in) = dehydroepiandrosterone 3-sulfate(in) + glutarate(out). It catalyses the reaction glutarate(in) + succinate(out) = glutarate(out) + succinate(in). Functionally, renal transmembrane organic anion/dicarboxylate exchanger that participates in the reabsorption of conjugated steroids, as well as bile acids, driven by an outward gradient of dicarboxylates such as glutarate or succinate. Transports taurocholate, estrone 3-sulfate, and estradiol-17-glucuronide (17beta-estradiol 17-O-(beta-D-glucuronate)), but not androstanediol glucuronide (5alpha-androstane-3alpha,17beta-diol 3-O-(beta-D-glucuronate)). The polypeptide is Steroid transmembrane transporter SLC22A24 (Equus caballus (Horse)).